A 641-amino-acid chain; its full sequence is Probable ATP-dependent helicase YpvA (641 aa).

The Helicase ATP-binding domain maps to 29-303; the sequence is YDILPEKGFD…EFAELIEDAL (275 aa). 64–71 is an ATP binding site; that stretch reads AGVGTGKT. Cys-133, Cys-197, Cys-200, and Cys-206 together coordinate [4Fe-4S] cluster. Positions 257–260 match the DEGH box motif; that stretch reads DEGH.

This sequence belongs to the helicase family. DinG subfamily. [4Fe-4S] cluster is required as a cofactor.

The enzyme catalyses Couples ATP hydrolysis with the unwinding of duplex DNA at the replication fork by translocating in the 5'-3' direction. This creates two antiparallel DNA single strands (ssDNA). The leading ssDNA polymer is the template for DNA polymerase III holoenzyme which synthesizes a continuous strand.. It carries out the reaction ATP + H2O = ADP + phosphate + H(+). Functionally, might be a 5'-3' DNA helicase. This Bacillus subtilis (strain 168) protein is Probable ATP-dependent helicase YpvA (ypvA).